A 220-amino-acid chain; its full sequence is MGRRPARCYRQIKGKPYPKSRYCRGVPDPKIRIYDVGMKRKGVDEFPFCVHLVSWEKENVSSEALEAARIACNKYMVKSAGKDAFHLRIRVHPFHVLRINKMLSCAGADRLQTGMRGAFGKALGTCARVAIGQVLLSVRCKDAHGHHAQEALRRAKFKFPGRQKIIVSRKWGFTKFNRADFTKLRQEKRVVPDGVNAKFLSCHGPLANRQPGSAFLPAHY.

The protein belongs to the universal ribosomal protein uL16 family. In terms of assembly, component of the small ribosomal subunit. Mature ribosomes consist of a small (40S) and a large (60S) subunit. The 40S subunit contains about 33 different proteins and 1 molecule of RNA (18S). The 60S subunit contains about 49 different proteins and 3 molecules of RNA (25S, 5.8S and 5S). Interacts with NIK1. Interacts with LIMYB. Phosphorylated by NIK1 and NIK2 in vitro. Ubiquitous, with the highest expression in flowers. Expressed in seedlings, leaves, roots, stems and flowers. Expressed in young leaves, mostly in dividing cells and in the hydathodes, in the root tips and lateral root primordia, in pistils, anthers, and pollen grains, and in developing seeds.

It is found in the cytoplasm. It localises to the nucleus. In terms of biological role, ribosomal protein involved in translational regulation. Contribute to general translation under UV-B stress. Involved in the NIK1-mediated defense response to geminivirus infection. Acts coordinately with LIMYB as a transcriptional repressor. This Arabidopsis thaliana (Mouse-ear cress) protein is Large ribosomal subunit protein uL16z.